Here is a 393-residue protein sequence, read N- to C-terminus: Probable acetyl-CoA acyltransferase (393 aa).

Catalysis depends on Cys-88, which acts as the Acyl-thioester intermediate. Active-site proton acceptor residues include His-349 and Cys-378.

Belongs to the thiolase-like superfamily. Thiolase family.

Its subcellular location is the cytoplasm. It carries out the reaction 2 acetyl-CoA = acetoacetyl-CoA + CoA. This Staphylococcus aureus (strain Mu50 / ATCC 700699) protein is Probable acetyl-CoA acyltransferase.